The primary structure comprises 204 residues: Thiamine-phosphate synthase (204 aa).

4-amino-2-methyl-5-(diphosphooxymethyl)pyrimidine is bound by residues 28–32 and asparagine 60; that span reads QLRIK. Positions 61 and 80 each coordinate Mg(2+). 4-amino-2-methyl-5-(diphosphooxymethyl)pyrimidine is bound by residues serine 99 and lysine 128. 2-[(2R,5Z)-2-carboxy-4-methylthiazol-5(2H)-ylidene]ethyl phosphate contacts are provided by residues glycine 157 and 177 to 178; that span reads VT.

The protein belongs to the thiamine-phosphate synthase family. The cofactor is Mg(2+).

It catalyses the reaction 2-[(2R,5Z)-2-carboxy-4-methylthiazol-5(2H)-ylidene]ethyl phosphate + 4-amino-2-methyl-5-(diphosphooxymethyl)pyrimidine + 2 H(+) = thiamine phosphate + CO2 + diphosphate. It carries out the reaction 2-(2-carboxy-4-methylthiazol-5-yl)ethyl phosphate + 4-amino-2-methyl-5-(diphosphooxymethyl)pyrimidine + 2 H(+) = thiamine phosphate + CO2 + diphosphate. The enzyme catalyses 4-methyl-5-(2-phosphooxyethyl)-thiazole + 4-amino-2-methyl-5-(diphosphooxymethyl)pyrimidine + H(+) = thiamine phosphate + diphosphate. Its pathway is cofactor biosynthesis; thiamine diphosphate biosynthesis; thiamine phosphate from 4-amino-2-methyl-5-diphosphomethylpyrimidine and 4-methyl-5-(2-phosphoethyl)-thiazole: step 1/1. Its function is as follows. Condenses 4-methyl-5-(beta-hydroxyethyl)thiazole monophosphate (THZ-P) and 2-methyl-4-amino-5-hydroxymethyl pyrimidine pyrophosphate (HMP-PP) to form thiamine monophosphate (TMP). The sequence is that of Thiamine-phosphate synthase from Rhizobium etli (strain ATCC 51251 / DSM 11541 / JCM 21823 / NBRC 15573 / CFN 42).